A 505-amino-acid chain; its full sequence is Maturase K (505 aa).

The protein belongs to the intron maturase 2 family. MatK subfamily.

It is found in the plastid. The protein resides in the chloroplast. Its function is as follows. Usually encoded in the trnK tRNA gene intron. Probably assists in splicing its own and other chloroplast group II introns. The polypeptide is Maturase K (Illicium oligandrum (Star anise)).